Here is a 109-residue protein sequence, read N- to C-terminus: Nucleoid-associated protein LGAS_0369 (109 aa).

It belongs to the YbaB/EbfC family. Homodimer.

The protein localises to the cytoplasm. It localises to the nucleoid. Its function is as follows. Binds to DNA and alters its conformation. May be involved in regulation of gene expression, nucleoid organization and DNA protection. This is Nucleoid-associated protein LGAS_0369 from Lactobacillus gasseri (strain ATCC 33323 / DSM 20243 / BCRC 14619 / CIP 102991 / JCM 1131 / KCTC 3163 / NCIMB 11718 / NCTC 13722 / AM63).